A 299-amino-acid chain; its full sequence is Protein U23 (299 aa).

Residues 1–27 (MRKSEFNAKSCFLMIGICVFNLNSSSC) form the signal peptide. Residues 247-267 (LVIWICGISFVGAFIIVIVIL) traverse the membrane as a helical segment.

It is found in the host membrane. The polypeptide is Protein U23 (U23) (Human herpesvirus 6B (strain Z29) (HHV-6 variant B)).